Here is an 81-residue protein sequence, read N- to C-terminus: Putative membrane protein insertion efficiency factor (81 aa).

The protein belongs to the UPF0161 family.

The protein localises to the cell inner membrane. Functionally, could be involved in insertion of integral membrane proteins into the membrane. The protein is Putative membrane protein insertion efficiency factor of Legionella pneumophila subsp. pneumophila (strain Philadelphia 1 / ATCC 33152 / DSM 7513).